A 103-amino-acid chain; its full sequence is Large ribosomal subunit protein bL21 (103 aa).

This sequence belongs to the bacterial ribosomal protein bL21 family. Part of the 50S ribosomal subunit. Contacts protein L20.

Functionally, this protein binds to 23S rRNA in the presence of protein L20. This is Large ribosomal subunit protein bL21 from Clostridium botulinum (strain Alaska E43 / Type E3).